Here is a 483-residue protein sequence, read N- to C-terminus: UDP-N-acetylmuramoyl-L-alanyl-D-glutamate--2,6-diaminopimelate ligase (483 aa).

UDP-N-acetyl-alpha-D-muramoyl-L-alanyl-D-glutamate is bound at residue Ser30. Residue 109 to 115 (GTNGKTT) coordinates ATP. Residues 151–152 (TT), Ser178, and Arg186 each bind UDP-N-acetyl-alpha-D-muramoyl-L-alanyl-D-glutamate. Lys218 is subject to N6-carboxylysine. Meso-2,6-diaminopimelate is bound by residues Arg380, 403–406 (DNPR), Gly453, and Glu457. Residues 403–406 (DNPR) carry the Meso-diaminopimelate recognition motif motif.

Belongs to the MurCDEF family. MurE subfamily. Requires Mg(2+) as cofactor. Post-translationally, carboxylation is probably crucial for Mg(2+) binding and, consequently, for the gamma-phosphate positioning of ATP.

The protein resides in the cytoplasm. The enzyme catalyses UDP-N-acetyl-alpha-D-muramoyl-L-alanyl-D-glutamate + meso-2,6-diaminopimelate + ATP = UDP-N-acetyl-alpha-D-muramoyl-L-alanyl-gamma-D-glutamyl-meso-2,6-diaminopimelate + ADP + phosphate + H(+). Its pathway is cell wall biogenesis; peptidoglycan biosynthesis. Its function is as follows. Catalyzes the addition of meso-diaminopimelic acid to the nucleotide precursor UDP-N-acetylmuramoyl-L-alanyl-D-glutamate (UMAG) in the biosynthesis of bacterial cell-wall peptidoglycan. This is UDP-N-acetylmuramoyl-L-alanyl-D-glutamate--2,6-diaminopimelate ligase from Chlamydia muridarum (strain MoPn / Nigg).